The sequence spans 196 residues: Large ribosomal subunit protein eL15 (196 aa).

Disordered stretches follow at residues 72-93 and 163-196; these read SARK…TRIT and GLTG…GKGK.

The protein belongs to the eukaryotic ribosomal protein eL15 family. In terms of assembly, part of the 50S ribosomal subunit. Interacts with protein L7Ae and weakly with L44e.

The sequence is that of Large ribosomal subunit protein eL15 (rpl15e) from Haloarcula marismortui (strain ATCC 43049 / DSM 3752 / JCM 8966 / VKM B-1809) (Halobacterium marismortui).